We begin with the raw amino-acid sequence, 505 residues long: Cytochrome P450 monooxygenase efuB (505 aa).

Residues 12–34 (GFWPTVAGTVATYLFYQIVATVY) traverse the membrane as a helical segment. A heme-binding site is contributed by Cys450.

It belongs to the cytochrome P450 family. It depends on heme as a cofactor.

It localises to the membrane. Its pathway is secondary metabolite biosynthesis; terpenoid biosynthesis. Functionally, cytochrome P450 monooxygenase; part of the gene cluster that mediates the biosynthesis of enfumafungin, a glycosylated fernene-type triterpenoid with potent antifungal activity, mediated by its interaction with beta-1,3-glucan synthase and the fungal cell wall. The pathway begins with the terpene cyclase-glycosyl transferase fusion protein that most likely uses 2,3-oxidosqualene as substrate and catalyzes glycosylation immediately after cyclization. The fernene glycoside then could be processed by the desaturase efuI which catalyzes isomerization of a double bond established by efuA to form the core structure. The latter would then undergo a series of hydroxylations in unknown order at C-2, C-19, C-23 and C-25, which would be catalyzed by two of the three cytochrome P450 monooxygenases efuB, efuG or efuH. The hydroxy-group at C-25 becomes oxidized by the dehydrogenase efuE to enable a spontaneous, non-enzymatic hemiacetal formation with C-23. After hydroxylation at C-2, acetylation by the acetyltransferase efuC takes place. The final steps in enfumafungin biosynthesis require expansion of the 5-membered ring by lactonization via a Baeyer-Villiger reaction mediated by one of the BGC's cytochrome P450 monooxygenases (efuB, efuG or efuH) followed by ring cleavage. This type of reaction would establish a double bond between C-20 and C-21 which could be reduced by the reductase efuL to form the final product. The polypeptide is Cytochrome P450 monooxygenase efuB (Hormonema carpetanum).